The primary structure comprises 422 residues: Ameloblastin (422 aa).

A signal peptide spans 1–26 (MSASKIPLFKMKGLLLFLSLVKMSLA). At P42 the chain carries Hydroxyproline. Phosphoserine is present on S48. The O-linked (GalNAc...) serine glycan is linked to S117. Residues 271-321 (GLNQNSPKGGDFTVEVDSPVSVTKGPEKGEGPEGSPLQEASPDKGENPALL) form a disordered region.

Belongs to the ameloblastin family. Ameloblast-specific.

Its subcellular location is the secreted. It is found in the extracellular space. It localises to the extracellular matrix. In terms of biological role, involved in the mineralization and structural organization of enamel. In Rattus norvegicus (Rat), this protein is Ameloblastin (Ambn).